A 258-amino-acid polypeptide reads, in one-letter code: F-box/SPRY domain-containing protein 1 (258 aa).

The 49-residue stretch at 6–54 (MEYAPNIPDNVLELIFSFLKLQDLRNCTLVCKSWYRFFCDENNEVWRAQ) folds into the F-box domain. Residues 64-256 (FKNDLLTVVP…ISMVYLGAPL (193 aa)) form the B30.2/SPRY domain.

Belongs to the FBXO45/Fsn family. Component of an E3 ubiquitin ligase complex composed of hiw and Fsn.

Its subcellular location is the synapse. Its pathway is protein modification; protein ubiquitination. Required in the presynaptic motoneuron to down-regulate the levels of wnd and restrain synaptic terminal growth at the neuromuscular junction (NMJ). The sequence is that of F-box/SPRY domain-containing protein 1 from Anopheles gambiae (African malaria mosquito).